The chain runs to 234 residues: MAKKLSKRREALLKKVDATKEYSVDEAMATLKELKSAKFDETVEVALNLNVDPRHADQMVRGSVVLPHGTGKTVRVAVFAKDAKADEAKAAGADLVGAADLIEDIQAGKIDFDIVISTPDMMGVLGKVARVLGPKGLMPNPKTGTVTMDVAKAVENAKGGQVNFRVDKKGNIHAGIGKISFDADKIKENFVTLLEKINRAKPASAKGRYITNAAVSLTMSPSITLDTSEVMEIK.

It belongs to the universal ribosomal protein uL1 family. Part of the 50S ribosomal subunit.

In terms of biological role, binds directly to 23S rRNA. The L1 stalk is quite mobile in the ribosome, and is involved in E site tRNA release. Functionally, protein L1 is also a translational repressor protein, it controls the translation of the L11 operon by binding to its mRNA. This Sulfurovum sp. (strain NBC37-1) protein is Large ribosomal subunit protein uL1.